The primary structure comprises 323 residues: Elongation factor P--(R)-beta-lysine ligase (323 aa).

74–76 (SPE) is a binding site for substrate. ATP is bound by residues 98–100 (RNE) and asparagine 107. Position 116 (tyrosine 116) interacts with substrate. 242–243 (EL) provides a ligand contact to ATP. Glutamate 249 is a binding site for substrate. An ATP-binding site is contributed by glycine 298.

It belongs to the class-II aminoacyl-tRNA synthetase family. EpmA subfamily. Homodimer.

It catalyses the reaction D-beta-lysine + L-lysyl-[protein] + ATP = N(6)-((3R)-3,6-diaminohexanoyl)-L-lysyl-[protein] + AMP + diphosphate + H(+). Its function is as follows. With EpmB is involved in the beta-lysylation step of the post-translational modification of translation elongation factor P (EF-P). Catalyzes the ATP-dependent activation of (R)-beta-lysine produced by EpmB, forming a lysyl-adenylate, from which the beta-lysyl moiety is then transferred to the epsilon-amino group of a conserved specific lysine residue in EF-P. The sequence is that of Elongation factor P--(R)-beta-lysine ligase from Vibrio campbellii (strain ATCC BAA-1116).